A 557-amino-acid polypeptide reads, in one-letter code: Protein NRT1/ PTR FAMILY 2.6 (557 aa).

The next 12 membrane-spanning stretches (helical) occupy residues 26 to 46, 67 to 87, 89 to 109, 136 to 156, 177 to 197, 203 to 223, 318 to 338, 356 to 376, 398 to 418, 439 to 459, 478 to 498, and 518 to 538; these read ITFP…LGWL, ILNI…IAAD, FFGT…GVVL, NIQL…AGGL, FFNW…TAIV, ISWS…LIVF, IIPL…QLGL, IPAG…IIVN, VGIG…VEAK, VLWL…HFPG, SITS…IDLI, and YWIL…CSWF.

Belongs to the major facilitator superfamily. Proton-dependent oligopeptide transporter (POT/PTR) (TC 2.A.17) family. As to expression, expressed in roots.

The protein localises to the membrane. In terms of biological role, transporter involved in a passive nitrate efflux. This chain is Protein NRT1/ PTR FAMILY 2.6 (NPF2.6), found in Arabidopsis thaliana (Mouse-ear cress).